A 504-amino-acid chain; its full sequence is Signal transduction histidine-protein kinase/phosphatase MprB (504 aa).

The Cytoplasmic segment spans residues 1–26 (MWWFRRRDRAPLRATSSLSLRWRVML). The helical transmembrane segment at 27-47 (LAMSMVAMVVVLMSFAVYAVI) threads the bilayer. Topologically, residues 48–163 (SAALYSDIDN…PTEAVMNKLR (116 aa)) are extracellular. A helical transmembrane segment spans residues 164–184 (WVLLIVGGIGVAVAAVAGGMV). Over 185 to 504 (TRAGLRPVGR…SVESQSTRAT (320 aa)) the chain is Cytoplasmic. Positions 186–238 (RAGLRPVGRLTEAAERVARTDDLRPIPVFGSDELARLTEAFNLMLRALAESRE) constitute an HAMP domain. Residues 246 to 466 (DAGHELRTPL…SIYVLLPGRR (221 aa)) form the Histidine kinase domain. At H249 the chain carries Phosphohistidine; by autocatalysis. The segment at 471 to 504 (QLPGATAGARSTDIENSRGSANVISVESQSTRAT) is disordered. Residues 487–504 (SRGSANVISVESQSTRAT) show a composition bias toward polar residues.

Requires Mg(2+) as cofactor. The cofactor is Mn(2+). Post-translationally, autophosphorylated.

The protein resides in the cell membrane. The catalysed reaction is ATP + protein L-histidine = ADP + protein N-phospho-L-histidine.. In terms of biological role, member of the two-component regulatory system MprB/MprA which contributes to maintaining a balance among several systems involved in stress resistance and is required for establishment and maintenance of persistent infection in the host. In response to environmental signals MprB acts both as a membrane-associated protein kinase that undergoes autophosphorylation and subsequently transfers the phosphate to MprA, and a protein phosphatase that dephosphorylates phospho-MprA. MprB/MprA up-regulates expression of mprA and pepD. This is Signal transduction histidine-protein kinase/phosphatase MprB (mprB) from Mycobacterium bovis (strain ATCC BAA-935 / AF2122/97).